Consider the following 552-residue polypeptide: Phosphoglucomutase (552 aa).

Catalysis depends on S143, which acts as the Phosphoserine intermediate. Mg(2+) contacts are provided by S143, D295, D297, and D299.

This sequence belongs to the phosphohexose mutase family. Requires Mg(2+) as cofactor.

It carries out the reaction alpha-D-glucose 1-phosphate = alpha-D-glucose 6-phosphate. It participates in glycolipid metabolism; diglucosyl-diacylglycerol biosynthesis. Its function is as follows. Catalyzes the interconversion between glucose-6-phosphate and alpha-glucose-1-phosphate. This is the first step in the biosynthesis of diglucosyl-diacylglycerol (Glc2-DAG), i.e. the predominant glycolipid found in the S.aureus membrane, which is also used as a membrane anchor for lipoteichoic acid (LTA). The protein is Phosphoglucomutase (pgcA) of Staphylococcus aureus (strain bovine RF122 / ET3-1).